Reading from the N-terminus, the 946-residue chain is ATP-dependent 6-phosphofructokinase subunit beta (946 aa).

Residues 1-559 (MISIVNGTST…HLANFMAMNT (559 aa)) are N-terminal catalytic PFK domain 1. Residues Gly192, 256 to 257 (RC), and 286 to 289 (GDGS) each bind ATP. Asp287 lines the Mg(2+) pocket. Residues 332 to 334 (SID), Arg369, 376 to 378 (MGR), Glu433, Arg461, and 467 to 470 (HVQR) each bind beta-D-fructose 6-phosphate. Asp334 acts as the Proton acceptor in catalysis. The segment at 560 to 573 (ANHEKPTLPREKRK) is interdomain linker. The segment at 574–946 (KIAIINIGAP…LVGRTRLDKP (373 aa)) is C-terminal regulatory PFK domain 2. Beta-D-fructose 2,6-bisphosphate-binding positions include Arg644, 702-706 (TISNN), 747-749 (QGG), Lys833, 839-842 (HVQQ), and Arg920.

Belongs to the phosphofructokinase type A (PFKA) family. ATP-dependent PFK group I subfamily. Eukaryotic two domain clade 'E' sub-subfamily. Heterooctamer of 4 alpha and 4 beta chains. Mg(2+) is required as a cofactor.

Its subcellular location is the cytoplasm. The enzyme catalyses beta-D-fructose 6-phosphate + ATP = beta-D-fructose 1,6-bisphosphate + ADP + H(+). It participates in carbohydrate degradation; glycolysis; D-glyceraldehyde 3-phosphate and glycerone phosphate from D-glucose: step 3/4. With respect to regulation, allosterically activated by ADP, AMP, or fructose 2,6-bisphosphate, and allosterically inhibited by ATP or citrate. Functionally, catalyzes the phosphorylation of D-fructose 6-phosphate to fructose 1,6-bisphosphate by ATP, the first committing step of glycolysis. The chain is ATP-dependent 6-phosphofructokinase subunit beta (PFK2) from Candida albicans (Yeast).